Here is a 577-residue protein sequence, read N- to C-terminus: Proline--tRNA ligase (577 aa).

The protein belongs to the class-II aminoacyl-tRNA synthetase family. ProS type 1 subfamily. As to quaternary structure, homodimer.

The protein resides in the cytoplasm. The catalysed reaction is tRNA(Pro) + L-proline + ATP = L-prolyl-tRNA(Pro) + AMP + diphosphate. Catalyzes the attachment of proline to tRNA(Pro) in a two-step reaction: proline is first activated by ATP to form Pro-AMP and then transferred to the acceptor end of tRNA(Pro). As ProRS can inadvertently accommodate and process non-cognate amino acids such as alanine and cysteine, to avoid such errors it has two additional distinct editing activities against alanine. One activity is designated as 'pretransfer' editing and involves the tRNA(Pro)-independent hydrolysis of activated Ala-AMP. The other activity is designated 'posttransfer' editing and involves deacylation of mischarged Ala-tRNA(Pro). The misacylated Cys-tRNA(Pro) is not edited by ProRS. The chain is Proline--tRNA ligase from Janthinobacterium sp. (strain Marseille) (Minibacterium massiliensis).